The sequence spans 120 residues: NAD(P)H-quinone oxidoreductase subunit 3, chloroplastic (120 aa).

Helical transmembrane passes span 9–29 (IFWAFLVISSVIPILAFIISG), 64–84 (MFALVFVVFDVETVFLYPWAM), and 88–108 (VLGVSVFIEALIFVLILIVGS).

It belongs to the complex I subunit 3 family. As to quaternary structure, NDH is composed of at least 16 different subunits, 5 of which are encoded in the nucleus.

The protein resides in the plastid. Its subcellular location is the chloroplast thylakoid membrane. The enzyme catalyses a plastoquinone + NADH + (n+1) H(+)(in) = a plastoquinol + NAD(+) + n H(+)(out). It catalyses the reaction a plastoquinone + NADPH + (n+1) H(+)(in) = a plastoquinol + NADP(+) + n H(+)(out). Its function is as follows. NDH shuttles electrons from NAD(P)H:plastoquinone, via FMN and iron-sulfur (Fe-S) centers, to quinones in the photosynthetic chain and possibly in a chloroplast respiratory chain. The immediate electron acceptor for the enzyme in this species is believed to be plastoquinone. Couples the redox reaction to proton translocation, and thus conserves the redox energy in a proton gradient. In Lemna minor (Common duckweed), this protein is NAD(P)H-quinone oxidoreductase subunit 3, chloroplastic.